The following is an 814-amino-acid chain: Pre-rRNA-processing protein TSR1 homolog (814 aa).

The interval 1-67 is disordered; that stretch reads MADHAFHRPG…NQMNQLRKNK (67 aa). Basic residues predominate over residues 16 to 27; sequence NKAHKTGRHRSK. The 166-residue stretch at 84 to 249 folds into the Bms1-type G domain; that stretch reads APFLVCLLPM…MRRIGGQKKR (166 aa). Disordered regions lie at residues 316-357 and 392-448; these read PYKL…DAEQ and WIPD…EEFQ. Residues 317–340 are compositionally biased toward basic and acidic residues; sequence YKLDKSRDGENSEVRLLDRSDPSK. A compositionally biased stretch (acidic residues) spans 395 to 426; the sequence is DVEEVEDPDGKDDDDMSEDDDDDKEDDNEDFM. The span at 431-442 shows a compositional bias: basic and acidic residues; that stretch reads KSFEDEYEKRDS. Residue Thr-444 is modified to Phosphothreonine.

Belongs to the TRAFAC class translation factor GTPase superfamily. Bms1-like GTPase family. TSR1 subfamily.

It localises to the nucleus. It is found in the nucleolus. Its function is as follows. Required during maturation of the 40S ribosomal subunit in the nucleolus. The polypeptide is Pre-rRNA-processing protein TSR1 homolog (Drosophila melanogaster (Fruit fly)).